Consider the following 262-residue polypeptide: Small ribosomal subunit protein eS1 (262 aa).

Basic and acidic residues predominate over residues D234–E251. Positions D234–H262 are disordered.

It belongs to the eukaryotic ribosomal protein eS1 family. As to quaternary structure, component of the small ribosomal subunit. Mature ribosomes consist of a small (40S) and a large (60S) subunit. The 40S subunit contains about 33 different proteins and 1 molecule of RNA (18S). The 60S subunit contains about 49 different proteins and 3 molecules of RNA (25S, 5.8S and 5S).

The protein resides in the cytoplasm. The chain is Small ribosomal subunit protein eS1 from Plasmodium yoelii yoelii.